We begin with the raw amino-acid sequence, 817 residues long: Lon protease (817 aa).

One can recognise a Lon N-terminal domain in the interval Val-22–Leu-216. Gly-368–Thr-375 lines the ATP pocket. Residues Ala-604 to Gly-785 form the Lon proteolytic domain. Catalysis depends on residues Ser-691 and Lys-734. Residues Asn-784–Lys-817 are disordered. A compositionally biased stretch (basic residues) spans Thr-789–Lys-817.

Belongs to the peptidase S16 family. Homohexamer. Organized in a ring with a central cavity.

The protein localises to the cytoplasm. It catalyses the reaction Hydrolysis of proteins in presence of ATP.. Its function is as follows. ATP-dependent serine protease that mediates the selective degradation of mutant and abnormal proteins as well as certain short-lived regulatory proteins. Required for cellular homeostasis and for survival from DNA damage and developmental changes induced by stress. Degrades polypeptides processively to yield small peptide fragments that are 5 to 10 amino acids long. Binds to DNA in a double-stranded, site-specific manner. The polypeptide is Lon protease (Desulfosudis oleivorans (strain DSM 6200 / JCM 39069 / Hxd3) (Desulfococcus oleovorans)).